The chain runs to 356 residues: S-adenosylmethionine:tRNA ribosyltransferase-isomerase (356 aa).

The protein belongs to the QueA family. In terms of assembly, monomer.

The protein resides in the cytoplasm. It catalyses the reaction 7-aminomethyl-7-carbaguanosine(34) in tRNA + S-adenosyl-L-methionine = epoxyqueuosine(34) in tRNA + adenine + L-methionine + 2 H(+). Its pathway is tRNA modification; tRNA-queuosine biosynthesis. In terms of biological role, transfers and isomerizes the ribose moiety from AdoMet to the 7-aminomethyl group of 7-deazaguanine (preQ1-tRNA) to give epoxyqueuosine (oQ-tRNA). This Xanthomonas euvesicatoria pv. vesicatoria (strain 85-10) (Xanthomonas campestris pv. vesicatoria) protein is S-adenosylmethionine:tRNA ribosyltransferase-isomerase.